A 204-amino-acid polypeptide reads, in one-letter code: ATP synthase subunit b 2 (204 aa).

Residues 8–28 are disordered; it reads AQSSTTEGAEAHDAAAAGEVH. Residues 56 to 76 traverse the membrane as a helical segment; sequence LLWLAITFGLFYLLMSKVIIP.

The protein belongs to the ATPase B chain family. In terms of assembly, F-type ATPases have 2 components, F(1) - the catalytic core - and F(0) - the membrane proton channel. F(1) has five subunits: alpha(3), beta(3), gamma(1), delta(1), epsilon(1). F(0) has three main subunits: a(1), b(2) and c(10-14). The alpha and beta chains form an alternating ring which encloses part of the gamma chain. F(1) is attached to F(0) by a central stalk formed by the gamma and epsilon chains, while a peripheral stalk is formed by the delta and b chains.

Its subcellular location is the cell inner membrane. Its function is as follows. F(1)F(0) ATP synthase produces ATP from ADP in the presence of a proton or sodium gradient. F-type ATPases consist of two structural domains, F(1) containing the extramembraneous catalytic core and F(0) containing the membrane proton channel, linked together by a central stalk and a peripheral stalk. During catalysis, ATP synthesis in the catalytic domain of F(1) is coupled via a rotary mechanism of the central stalk subunits to proton translocation. In terms of biological role, component of the F(0) channel, it forms part of the peripheral stalk, linking F(1) to F(0). The b'-subunit is a diverged and duplicated form of b found in plants and photosynthetic bacteria. The sequence is that of ATP synthase subunit b 2 (atpF2) from Rhizobium meliloti (strain 1021) (Ensifer meliloti).